The sequence spans 317 residues: MKVALLGAAGGIGQTLALLLKLRLPVGTDLALYDISPVTPGIAVDISHIPTSVSAVGYSGEDPSEALKGANLVIITAGVARKPGMTRADLFNINADIVKNLVEKVAEVCPKACIGIVTNPVNTLVPIAAEVLRKAGVYDKRKLFGVTTLDVVRAKTFTSELKEKHVETVKVPVIGGHSGPTILPLLSQALSEGLPLSFTQEEIEALTYRIQNAGTEVVEAKAGGGSATLSMAESGARFAVAVFKALLGEDCVRYAYVESKEGSGYPEFFAHPVRFGLTGVEELLPIGKLSEYEQAKLGELKPVLEADIALGKNFVNP.

NAD(+) contacts are provided by residues 7-13 (GAAGGIG) and aspartate 34. Residues arginine 81 and arginine 87 each contribute to the substrate site. Residues asparagine 94 and 117–119 (VTN) contribute to the NAD(+) site. Residues asparagine 119 and arginine 153 each coordinate substrate. Histidine 177 serves as the catalytic Proton acceptor. Methionine 231 serves as a coordination point for NAD(+).

Belongs to the LDH/MDH superfamily. MDH type 1 family. Homodimer.

The enzyme catalyses (S)-malate + NAD(+) = oxaloacetate + NADH + H(+). Its function is as follows. Catalyzes the reversible oxidation of malate to oxaloacetate. The polypeptide is Malate dehydrogenase (Actinobacillus pleuropneumoniae serotype 5b (strain L20)).